The following is a 291-amino-acid chain: Inactive dihydropteroate synthase 2 (291 aa).

The 258-residue stretch at Q15 to E272 folds into the Pterin-binding domain.

It belongs to the DHPS family. In terms of assembly, homodimer.

In terms of biological role, has very low affinity for the DHPS substrate 6-hydroxymethyl-7,8-dihydropterin-pyrophosphate, but can bind the inhibitor dapsone. Seems to lack dihydropteroate synthase activity, and does probably not function in folate metabolism. This is Inactive dihydropteroate synthase 2 (folP2) from Mycobacterium leprae (strain TN).